Reading from the N-terminus, the 551-residue chain is Probable metalloreductase AIM14 (551 aa).

7 helical membrane-spanning segments follow: residues 25 to 45 (GIII…VKFI), 67 to 87 (PTWM…GANI), 100 to 117 (RYGR…YLIL), 138 to 155 (KWLS…AIGY), 172 to 192 (FLNF…IVSI), 199 to 221 (YYSL…IIFH), and 225 to 247 (GVTI…LRFY). Residues 102 to 217 (GRIAYCLLPL…NITAWSMVVL (116 aa)) form the Ferric oxidoreductase domain. In terms of domain architecture, FAD-binding FR-type spans 247–369 (YKSYPVNNLK…GGSGISFGLP (123 aa)). The disordered stretch occupies residues 440 to 492 (QDESHAKVEQTQGEEEVDGLLNQDENGIPLQSMKKESFPKKEEGEDEEKSSKD). Over residues 472–492 (MKKESFPKKEEGEDEEKSSKD) the composition is skewed to basic and acidic residues.

The protein belongs to the ferric reductase (FRE) family. AIM14 subfamily.

It is found in the membrane. Its function is as follows. Probable cell surface metalloreductase. May be involved in iron or copper homeostasis. The polypeptide is Probable metalloreductase AIM14 (AIM14) (Candida tropicalis (strain ATCC MYA-3404 / T1) (Yeast)).